The sequence spans 418 residues: AA11 family lytic polysaccharide monooxygenase B (418 aa).

An N-terminal signal peptide occupies residues 1 to 21 (MMFSKSGLVAVAMLGASAVEA). Cu(+)-binding residues include His22 and His82. Disulfide bonds link Cys50–Cys165, Cys87–Cys113, and Cys206–Cys240. 2 N-linked (GlcNAc...) asparagine glycosylation sites follow: Asn120 and Asn134. The segment at 226-345 (DGNPSNLQPA…SSSSSNGALT (120 aa)) is disordered. Low complexity predominate over residues 254-345 (SPSTPSTSSS…SSSSSNGALT (92 aa)).

Belongs to the polysaccharide monooxygenase AA11 family. It depends on Cu(2+) as a cofactor.

Its subcellular location is the secreted. In terms of biological role, lytic polysaccharide monooxygenase (LPMO)-like protein that acts as a strict peroxygenase and does not catalyze a monooxygenase reaction. It is indeed hardly active on chitin, while being very active on soluble oligomers of N-acetylglucosamine. Cleaves the glycosidic bonds byoxidizing the C1 position. Also unable to oxidize cellopentaose. Probably breaks glycosidic bonds in non-polymeric substrates possibly carbohydrates in the cell wall of the fungus or its competitors. In the presence of chitotetraose, the enzyme can withstand considerable amounts of H(2)O(2), which it uses to efficiently and stoichiometrically convert this substrate. This Aspergillus fumigatus (strain ATCC MYA-4609 / CBS 101355 / FGSC A1100 / Af293) (Neosartorya fumigata) protein is AA11 family lytic polysaccharide monooxygenase B.